We begin with the raw amino-acid sequence, 123 residues long: MNAVTESAATTTEMPAPFVFTDAAADKVKQLIDEEGNPDLKLRVFVQGGGCSGFQYGFTFDEEVNEDDTVMNKNGVQLLIDSMSYQYLVGAEIDYKDDLNGAQFVIKNPNATTTCGCGSSFSV.

Iron-sulfur cluster is bound by residues Cys51, Cys115, and Cys117.

The protein belongs to the HesB/IscA family. Homodimer. It depends on iron-sulfur cluster as a cofactor.

Functionally, required for insertion of 4Fe-4S clusters. The chain is Putative iron-sulfur cluster insertion protein ErpA from Burkholderia multivorans (strain ATCC 17616 / 249).